The chain runs to 147 residues: Hemoglobin subunit beta (147 aa).

V2 is modified (N-acetylvaline). The region spanning 3-147 (HMSAEEKGIV…VAAALAHKYH (145 aa)) is the Globin domain. At T13 the chain carries Phosphothreonine. S45 bears the Phosphoserine mark. Position 60 is an N6-acetyllysine (K60). A heme b-binding site is contributed by H64. K83 is modified (N6-acetyllysine). H93 lines the heme b pocket. C94 is modified (S-nitrosocysteine). N6-acetyllysine is present on K145.

The protein belongs to the globin family. In terms of assembly, heterotetramer of two alpha chains and two beta chains. In terms of tissue distribution, red blood cells.

Involved in oxygen transport from the lung to the various peripheral tissues. The polypeptide is Hemoglobin subunit beta (HBB) (Scalopus aquaticus (Eastern mole)).